The sequence spans 168 residues: GPI-anchored protein LLG1 (168 aa).

The N-terminal stretch at 1-23 (MELLSRALFFFLLLSVLSSFSSS) is a signal peptide. N-linked (GlcNAc...) asparagine glycosylation is present at Asn-57. Asn-144 carries GPI-anchor amidated asparagine lipidation. A propeptide spans 145 to 168 (AATTSSSRLWLTVSAALLVFVKLF) (removed in mature form).

As to quaternary structure, interacts with FER. As to expression, expressed in pollen, pollen tubes, sporophytic pistil tissues, in the early stages of female gametophyte development, and in unfertilized, mature ovules. Expressed in roots, lateral roots, shoots, cotyledons, petioles, developing leaves and anther filaments.

The protein localises to the cell membrane. Functionally, component of the FER-regulated Rho GTPase signaling complex. Acts as a chaperone and coreceptor for FER. Required for localization of FER to the plasma membrane. This chain is GPI-anchored protein LLG1, found in Arabidopsis thaliana (Mouse-ear cress).